Here is a 273-residue protein sequence, read N- to C-terminus: Undecaprenyl-diphosphatase (273 aa).

7 helical membrane-spanning segments follow: residues 13–35 (GLVE…VFGN), 45–62 (VFEI…VFEY), 82–102 (FVLN…LFDK), 108–128 (LFNP…ILWV), 186–206 (TEFS…YDVL), 219–239 (LILI…KALL), and 250–270 (FAYY…SGWI).

The protein belongs to the UppP family.

It localises to the cell inner membrane. The enzyme catalyses di-trans,octa-cis-undecaprenyl diphosphate + H2O = di-trans,octa-cis-undecaprenyl phosphate + phosphate + H(+). In terms of biological role, catalyzes the dephosphorylation of undecaprenyl diphosphate (UPP). Confers resistance to bacitracin. The protein is Undecaprenyl-diphosphatase of Neisseria gonorrhoeae (strain ATCC 700825 / FA 1090).